A 580-amino-acid polypeptide reads, in one-letter code: MDDLALCEANNVPLTPMTFLKRASECYPNRTSIIYGKTRFTWPQTYDRCCRLAASLISLNISKNDVVSVMAPNTPALYEMHFAVPMAGAVLNPINTRLDATSIAAILRHAKPKILFLDRSFEALARESLHLLSSEDSNLNLPVIFIHENDFPKRASFEELDYECLIQRGEPTPSMVARMFRIQDEHDPISLNYTSGTTADPKGVVISHRGAYLCTLSAIIGWEMGTCPVYLWTLPMFHCNGWTFTWGTAARGGTSVCMRHVTAPEIYKNIEMHNVTHMCCVPTVFNILLKGNSLDLSPRSGPVHVLTGGSPPPAALVKKVQRLGFQVMHAYGQTEATGPILFCEWQDEWNRLPENQQMELKARQGISILGLADVDVKNKETQKSAPRDGKTMGEILIKGSSIMKGYLKNPKATFEAFKHGWLNTGDVGVIHPDGHVEIKDRSKDIIISGGENISSVEVENVLYKYPKVLETAVVAMPHPTWGETPCAFVVLEKSETTIKEDRVDKFQTRERNLIEYCRENLPHFMCPRKVVFLEELPKNGNGKILKPKLRDIAKGLVVEDEINVIAKEVKRPVGHFISRL.

Positions 578-580 match the Microbody targeting signal motif; it reads SRL.

Belongs to the ATP-dependent AMP-binding enzyme family.

It is found in the peroxisome. It carries out the reaction benzoate + ATP + CoA = benzoyl-CoA + AMP + diphosphate. Benzoate--CoA ligase involved in benzoyloxyglucosinolate biosynthesis in seeds. Glucosinolates are secondary metabolites involved in pathogen and insect defense of cruciferous plants. This is Benzoate--CoA ligase, peroxisomal (AAE20) from Arabidopsis thaliana (Mouse-ear cress).